A 188-amino-acid polypeptide reads, in one-letter code: F-box only protein 36 (188 aa).

The region spanning 91–137 is the F-box domain; that stretch reads FDFLERLSDDLLLTIISYLDLEDIARLCQTSHRFAKLCMSDKLWEQI.

Directly interacts with SKP1 and CUL1.

Its function is as follows. Substrate-recognition component of the SCF (SKP1-CUL1-F-box protein)-type E3 ubiquitin ligase complex. The sequence is that of F-box only protein 36 (FBXO36) from Homo sapiens (Human).